The primary structure comprises 117 residues: Large ribosomal subunit protein bL20c (117 aa).

It belongs to the bacterial ribosomal protein bL20 family.

It is found in the plastid. Its subcellular location is the chloroplast. In terms of biological role, binds directly to 23S ribosomal RNA and is necessary for the in vitro assembly process of the 50S ribosomal subunit. It is not involved in the protein synthesizing functions of that subunit. The polypeptide is Large ribosomal subunit protein bL20c (Draba nemorosa (Woodland whitlowgrass)).